The chain runs to 200 residues: Cytochrome c biogenesis ATP-binding export protein CcmA (200 aa).

One can recognise an ABC transporter domain in the interval M1–A200. G35–T42 contributes to the ATP binding site.

This sequence belongs to the ABC transporter superfamily. CcmA exporter (TC 3.A.1.107) family. In terms of assembly, the complex is composed of two ATP-binding proteins (CcmA) and two transmembrane proteins (CcmB).

Its subcellular location is the cell inner membrane. The enzyme catalyses heme b(in) + ATP + H2O = heme b(out) + ADP + phosphate + H(+). Part of the ABC transporter complex CcmAB involved in the biogenesis of c-type cytochromes; once thought to export heme, this seems not to be the case, but its exact role is uncertain. Responsible for energy coupling to the transport system. The sequence is that of Cytochrome c biogenesis ATP-binding export protein CcmA from Nitrobacter winogradskyi (strain ATCC 25391 / DSM 10237 / CIP 104748 / NCIMB 11846 / Nb-255).